A 67-amino-acid chain; its full sequence is DNA-directed RNA polymerase subunit omega (67 aa).

This sequence belongs to the RNA polymerase subunit omega family. In terms of assembly, the RNAP catalytic core consists of 2 alpha, 1 beta, 1 beta' and 1 omega subunit. When a sigma factor is associated with the core the holoenzyme is formed, which can initiate transcription.

The catalysed reaction is RNA(n) + a ribonucleoside 5'-triphosphate = RNA(n+1) + diphosphate. Functionally, promotes RNA polymerase assembly. Latches the N- and C-terminal regions of the beta' subunit thereby facilitating its interaction with the beta and alpha subunits. This is DNA-directed RNA polymerase subunit omega from Listeria welshimeri serovar 6b (strain ATCC 35897 / DSM 20650 / CCUG 15529 / CIP 8149 / NCTC 11857 / SLCC 5334 / V8).